Here is a 555-residue protein sequence, read N- to C-terminus: WRKY transcription factor WRKY24 (555 aa).

Disordered stretches follow at residues 38 to 65 (GGGG…PSSF) and 132 to 248 (QTAP…CTFP). Pro residues predominate over residues 51–61 (PSLPLSPPPVS). Residues 163 to 194 (QQQQQPWGYQQQPAGMDAGANAASFGAAPFQA) show a composition bias toward low complexity. A DNA-binding region (WRKY 1) is located at residues 214–278 (SQRRSSDDGY…YKGTHNHAKP (65 aa)). Positions 253–259 (KKKVERS) match the Nuclear localization signal motif. The segment at 270 to 367 (KGTHNHAKPQ…EGISMAGNRT (98 aa)) is disordered. Polar residues-rich tracts occupy residues 277 to 294 (KPQN…QVLQ) and 310 to 320 (TAATPENSSAS). Basic and acidic residues predominate over residues 347–356 (DSKRWRKDGD). Residues 379 to 444 (SDIDILDDGY…YEGKHNHDVP (66 aa)) constitute a DNA-binding region (WRKY 2). A transcription repression of gibberellic acid (GA)-induced promoters region spans residues 466–555 (HPYLPNQPPP…DDMFFQNSLY (90 aa)). 2 disordered regions span residues 471–498 (NQPP…GQGP) and 513–555 (GFDD…NSLY).

The protein belongs to the WRKY group II-a family. As to expression, expressed in aleurone cells. Mostly expressed in aleurone layers and leaves, and, to a lower extent, in roots, panicles and embryos.

It localises to the nucleus. Its function is as follows. Transcription repressor. Interacts specifically with the W box (5'-(T)TGAC[CT]-3'), a frequently occurring elicitor-responsive cis-acting element. Negative regulator of both gibberellic acid (GA) and abscisic acid (ABA) signaling in aleurone cells, probably by interfering with GAM1, via the specific repression of GA- and ABA-induced promoters. The polypeptide is WRKY transcription factor WRKY24 (Oryza sativa subsp. indica (Rice)).